A 368-amino-acid chain; its full sequence is Ethanol acetyltransferase 1 (368 aa).

The N-terminal 21 residues, 1 to 21 (MFLSLRPSLSVSRLAVVRRAY), are a transit peptide targeting the mitochondrion. An AB hydrolase-1 domain is found at 67–171 (PIIFFHGLLG…IIDNAPEPQP (105 aa)). Catalysis depends on charge relay system residues Ser-140, Asp-164, and His-315. The segment at 344 to 368 (RNKDPNNYMQTQNSISNSDTMGQSL) is disordered. A compositionally biased stretch (polar residues) spans 348-368 (PNNYMQTQNSISNSDTMGQSL).

This sequence belongs to the AB hydrolase superfamily.

Its subcellular location is the mitochondrion. It carries out the reaction ethanol + acetyl-CoA = ethyl acetate + CoA. The enzyme catalyses acetyl-CoA + H2O = acetate + CoA + H(+). The catalysed reaction is ethyl acetate + H2O = ethanol + acetate + H(+). Alcohol acetyltransferase that catalyzes the synthesis of ethyl acetate from ethanol and acetyl-CoA. Can also function as a thioesterase by hydrolyzing acetyl-CoA in the absence of ethanol, as well as esterase hydrolyzing ethyl acetate. This is Ethanol acetyltransferase 1 (EAT1) from Kluyveromyces lactis (strain ATCC 8585 / CBS 2359 / DSM 70799 / NBRC 1267 / NRRL Y-1140 / WM37) (Yeast).